The primary structure comprises 101 residues: UPF0235 protein MmarC7_0309 (101 aa).

This sequence belongs to the UPF0235 family.

The sequence is that of UPF0235 protein MmarC7_0309 from Methanococcus maripaludis (strain C7 / ATCC BAA-1331).